The sequence spans 406 residues: Kelch domain-containing protein 2 (406 aa).

Kelch repeat units follow at residues 31–85 (ERSG…NTEG), 92–136 (SGSC…ERID), 148–207 (LGVW…AWSQ), 221–259 (HACA…NELI), 271–311 (HSLT…IQFN), and 322–359 (HTAC…IFSV).

In terms of assembly, component of a CRL2(KLHDC2) E3 ubiquitin-protein ligase complex, also named ECS(KLHDC2) complex, composed of CUL2, Elongin BC (ELOB and ELOC), RBX1 and substrate-specific adapter KLHDC2. May form oligomers as a KLHDC2-ELOB-ELOC complex; this interaction is autoinhibitory for the E3 ligase complex as the substrate-binding site of KLHDC2 is blocked in the oligomer. Interacts with CREB3; interaction is direct and specific as it does not interact with CREB1, ATF4, ATF6, JUN, FOS, CEBPA or herpes simplex virus transactivator VP16. In terms of processing, autoubiquitinated by the CRL2(KLHDC2) E3 ligase complex.

The protein localises to the nucleus. Its pathway is protein modification; protein ubiquitination. In terms of biological role, substrate-recognition component of a Cul2-RING (CRL2) E3 ubiquitin-protein ligase complex of the DesCEND (destruction via C-end degrons) pathway, which recognizes a C-degron located at the extreme C terminus of target proteins, leading to their ubiquitination and degradation. The C-degron recognized by the DesCEND pathway is usually a motif of less than ten residues and can be present in full-length proteins, truncated proteins or proteolytically cleaved forms. The CRL2(KLHDC2) complex specifically recognizes proteins with a diglycine (Gly-Gly) at the C-terminus, leading to their ubiquitination and degradation. The CRL2(KLHDC2) complex mediates ubiquitination and degradation of truncated SELENOK and SELENOS selenoproteins produced by failed UGA/Sec decoding, which end with a diglycine. The CRL2(KLHDC2) complex also recognizes proteolytically cleaved proteins ending with Gly-Gly, such as the N-terminal fragment of USP1, leading to their degradation. May also act as an indirect repressor of CREB3-mediated transcription by interfering with CREB3-DNA-binding. The sequence is that of Kelch domain-containing protein 2 from Rattus norvegicus (Rat).